The primary structure comprises 190 residues: Crossover junction endodeoxyribonuclease RuvC (190 aa).

Active-site residues include aspartate 7, glutamate 67, and aspartate 140. Mg(2+) is bound by residues aspartate 7, glutamate 67, and aspartate 140.

This sequence belongs to the RuvC family. As to quaternary structure, homodimer which binds Holliday junction (HJ) DNA. The HJ becomes 2-fold symmetrical on binding to RuvC with unstacked arms; it has a different conformation from HJ DNA in complex with RuvA. In the full resolvosome a probable DNA-RuvA(4)-RuvB(12)-RuvC(2) complex forms which resolves the HJ. It depends on Mg(2+) as a cofactor.

The protein localises to the cytoplasm. It carries out the reaction Endonucleolytic cleavage at a junction such as a reciprocal single-stranded crossover between two homologous DNA duplexes (Holliday junction).. Its function is as follows. The RuvA-RuvB-RuvC complex processes Holliday junction (HJ) DNA during genetic recombination and DNA repair. Endonuclease that resolves HJ intermediates. Cleaves cruciform DNA by making single-stranded nicks across the HJ at symmetrical positions within the homologous arms, yielding a 5'-phosphate and a 3'-hydroxyl group; requires a central core of homology in the junction. The consensus cleavage sequence is 5'-(A/T)TT(C/G)-3'. Cleavage occurs on the 3'-side of the TT dinucleotide at the point of strand exchange. HJ branch migration catalyzed by RuvA-RuvB allows RuvC to scan DNA until it finds its consensus sequence, where it cleaves and resolves the cruciform DNA. The sequence is that of Crossover junction endodeoxyribonuclease RuvC from Fusobacterium nucleatum subsp. nucleatum (strain ATCC 25586 / DSM 15643 / BCRC 10681 / CIP 101130 / JCM 8532 / KCTC 2640 / LMG 13131 / VPI 4355).